A 499-amino-acid chain; its full sequence is GTPase Der (499 aa).

2 EngA-type G domains span residues 3–166 (PVVA…LETL) and 213–386 (IKFA…QSAT). Residues 9–16 (GRPNVGKS), 56–60 (DTGGI), 118–121 (NKTD), 219–226 (GRPNVGKS), 266–270 (DTAGV), and 331–334 (NKWD) contribute to the GTP site. Positions 387–471 (RRTSTAMLTR…PVRVEFQESA (85 aa)) constitute a KH-like domain.

The protein belongs to the TRAFAC class TrmE-Era-EngA-EngB-Septin-like GTPase superfamily. EngA (Der) GTPase family. Associates with the 50S ribosomal subunit.

GTPase that plays an essential role in the late steps of ribosome biogenesis. This is GTPase Der from Aeromonas hydrophila subsp. hydrophila (strain ATCC 7966 / DSM 30187 / BCRC 13018 / CCUG 14551 / JCM 1027 / KCTC 2358 / NCIMB 9240 / NCTC 8049).